We begin with the raw amino-acid sequence, 469 residues long: MALAEADLPNGKTNGKASGSEETPAPVQKVDMNVAINELRVGCKVHVEKDGEDRVAEILSVQMRRGNLEFYVHYVEFNKRLDERIAATRVDLSQGVIWPEPEKPKKPLSGAAKESSKEKKKNPSKKQKLTDSAATTPGANSEDVMDLDNLQVNGTTQDPDNFNRDEEIEKLRTGGSMTQSSHEVARVRNLQRIVLGNHVIEPWYFSPYPIELTEEDEIYICDFTLCYFGSKKQFERFRSKSTLRHPPGNEIYRDEAVSFFEIDGRKQRTWCRNLCLLSKLFLDHKTLYYDVDPFLFYCMTRRDEKGHHLVGYFSKEKESAEGYNVACILTLPQYQRHGYGRLLIDFSYALSKAEGKTGSPEKPLSDLGLLSYRAYWADTIIELLMEKGKQEMTIEDIASVTAMTTTDVLHTLQTYNMLKYYKGQHIICLTDSVCEKYEKMLKKRRRKVNSELLKWKPPVFTAAQLRFAW.

The disordered stretch occupies residues methionine 1–proline 26. Over residues glycine 11–glutamate 21 the composition is skewed to polar residues. In terms of domain architecture, Tudor-knot spans leucine 39–leucine 92. Residues tryptophan 98 to asparagine 163 form a disordered region. Basic residues predominate over residues glutamate 118–glutamine 127. Polar residues-rich tracts occupy residues threonine 130–alanine 139 and leucine 150–aspartate 160. The MYST-type HAT domain maps to alanine 185–proline 457. The C2HC MYST-type; degenerate zinc finger occupies isoleucine 218 to leucine 243. Lysine 285 is subject to N6-acetyllysine; by autocatalysis. Residues alanine 326 to threonine 330 and glutamine 335 to arginine 341 contribute to the acetyl-CoA site. Glutamate 361 serves as the catalytic Proton donor/acceptor. Residue serine 365 coordinates acetyl-CoA.

This sequence belongs to the MYST (SAS/MOZ) family. As to quaternary structure, component of the NuA4 histone acetyltransferase complex. In terms of processing, autoacetylation at Lys-285 is required for proper function.

The protein localises to the nucleus. Its subcellular location is the chromosome. The catalysed reaction is L-lysyl-[histone] + acetyl-CoA = N(6)-acetyl-L-lysyl-[histone] + CoA + H(+). It catalyses the reaction L-lysyl-[protein] + acetyl-CoA = N(6)-acetyl-L-lysyl-[protein] + CoA + H(+). The enzyme catalyses 2-hydroxyisobutanoyl-CoA + L-lysyl-[protein] = N(6)-(2-hydroxyisobutanoyl)-L-lysyl-[protein] + CoA + H(+). It carries out the reaction (2E)-butenoyl-CoA + L-lysyl-[protein] = N(6)-(2E)-butenoyl-L-lysyl-[protein] + CoA + H(+). Functionally, catalytic component of the NuA4 histone acetyltransferase (HAT) complex which is involved in epigenetic transcriptional activation of selected genes principally by acetylation of nucleosomal histones H4, H3, H2B, H2A and H2A variant H2A.Z. Acetylates histone H4 to form H4K5ac, H4K8ac, H4K12ac and H4K16ac, histone H3 to form H3K14ac, and histone H2A to form H2AK4ac and H2AK7ac. The NuA4 complex is involved in the DNA damage response and is required for chromosome segregation. The NuA4 complex plays a direct role in repair of DNA double-strand breaks (DSBs) through homologous recombination. Recruitment to promoters depends on H3K4me. Also acetylates non-histone proteins. In addition to protein acetyltransferase, can use different acyl-CoA substrates, such as 2-hydroxyisobutanoyl-CoA (2-hydroxyisobutyryl-CoA) or (2E)-butenoyl-CoA (crotonyl-CoA), and is able to mediate protein 2-hydroxyisobutyrylation and crotonylation, respectively. This is Histone acetyltransferase ESA1 (ESA1) from Yarrowia lipolytica (strain CLIB 122 / E 150) (Yeast).